Here is a 54-residue protein sequence, read N- to C-terminus: uncharacterized protein (54 aa).

Positions 1–54 are disordered; sequence MSKKSTPMTKDAASRIQSSAAKSGGDVSSGSFASRAQSAAAINANNTSNSTGKK. Residues 28-54 are compositionally biased toward low complexity; it reads SSGSFASRAQSAAAINANNTSNSTGKK.

This is an uncharacterized protein from Dictyostelium discoideum (Social amoeba).